The sequence spans 235 residues: Urease accessory protein UreF (235 aa).

This sequence belongs to the UreF family. In terms of assembly, ureD, UreF and UreG form a complex that acts as a GTP-hydrolysis-dependent molecular chaperone, activating the urease apoprotein by helping to assemble the nickel containing metallocenter of UreC. The UreE protein probably delivers the nickel.

The protein resides in the cytoplasm. In terms of biological role, required for maturation of urease via the functional incorporation of the urease nickel metallocenter. This is Urease accessory protein UreF from Ureaplasma parvum serovar 3 (strain ATCC 27815 / 27 / NCTC 11736).